A 204-amino-acid chain; its full sequence is Recombination protein RecR (204 aa).

The C4-type zinc-finger motif lies at 63 to 78; the sequence is CRRCFNITVGELCAIC. Residues 86–181 form the Toprim domain; that stretch reads TKICVVEEPL…RVTRPARGLP (96 aa).

The protein belongs to the RecR family.

Functionally, may play a role in DNA repair. It seems to be involved in an RecBC-independent recombinational process of DNA repair. It may act with RecF and RecO. The polypeptide is Recombination protein RecR (Chloroflexus aurantiacus (strain ATCC 29366 / DSM 635 / J-10-fl)).